Reading from the N-terminus, the 189-residue chain is Putative manganese efflux pump MntP (189 aa).

Transmembrane regions (helical) follow at residues Pro-3–Gly-23, Leu-41–Ala-61, Asp-69–Ile-89, Phe-105–Gly-125, Ile-133–Met-153, and Ile-168–Ala-188.

It belongs to the MntP (TC 9.B.29) family.

The protein resides in the cell inner membrane. Functionally, probably functions as a manganese efflux pump. The chain is Putative manganese efflux pump MntP from Pseudomonas savastanoi pv. phaseolicola (strain 1448A / Race 6) (Pseudomonas syringae pv. phaseolicola (strain 1448A / Race 6)).